We begin with the raw amino-acid sequence, 447 residues long: Tektin-4 (447 aa).

Coiled coils occupy residues 69–144 and 304–423; these read ADRD…ALDA and FGRR…TNSL. Over residues 72-81 the composition is skewed to basic and acidic residues; sequence DQSERQRHES. The disordered stretch occupies residues 72–104; that stretch reads DQSERQRHESQQLAAETEALAQRTQQDSTRKVG. The span at 82-97 shows a compositional bias: low complexity; it reads QQLAAETEALAQRTQQ.

This sequence belongs to the tektin family. In terms of assembly, microtubule inner protein component of sperm flagellar doublet microtubules. Post-translationally, ubiquitinated, leading to its degradation. Deubiquitinated by USP16, promoting its stability. Expressed in trachea multiciliated cells.

The protein localises to the cytoplasm. The protein resides in the cytoskeleton. It is found in the cilium axoneme. It localises to the flagellum axoneme. Microtubule inner protein (MIP) part of the dynein-decorated doublet microtubules (DMTs) in cilia and flagellar axoneme. Forms filamentous polymers in the walls of ciliary and flagellar microtubules. Contributes to normal sperm motility. The polypeptide is Tektin-4 (TEKT4) (Bos taurus (Bovine)).